The chain runs to 368 residues: Type 2 DNA topoisomerase 6 subunit A (368 aa).

One can recognise a Topo IIA-type catalytic domain in the interval 9 to 148 (PDTEEAREQL…FHMRPEESGA (140 aa)). Tyr-103 serves as the catalytic O-(5'-phospho-DNA)-tyrosine intermediate. Glu-201 and Asp-253 together coordinate Mg(2+).

The protein belongs to the TOP6A family. Homodimer. Heterotetramer of two Top6A and two Top6B chains. Mg(2+) is required as a cofactor.

The catalysed reaction is ATP-dependent breakage, passage and rejoining of double-stranded DNA.. Its function is as follows. Relaxes both positive and negative superturns and exhibits a strong decatenase activity. The chain is Type 2 DNA topoisomerase 6 subunit A from Haloarcula marismortui (strain ATCC 43049 / DSM 3752 / JCM 8966 / VKM B-1809) (Halobacterium marismortui).